A 322-amino-acid chain; its full sequence is GATA transcription factor 8 (322 aa).

The interval 93–168 is disordered; sequence TLVEKKEDSF…DKDRVKDNVC (76 aa). Over residues 102 to 141 the composition is skewed to low complexity; that stretch reads FSTNTDSSSSHSQFRSSSPVSVLESSSSSSQTTNTTSLVL. Over residues 144-154 the composition is skewed to basic residues; the sequence is KHGRPRTKRPR. Residues 147-154 carry the Nuclear localization signal motif; it reads RPRTKRPR. The segment at 225–279 adopts a GATA-type zinc-finger fold; the sequence is QYPLRKCMHCEVTKTPQWRLGPMGPKTLCNACGVRYKSGRLFPEYRPAASPTFTP.

It belongs to the type IV zinc-finger family. Class A subfamily.

It localises to the nucleus. Transcriptional activator that specifically binds 5'-GATA-3' or 5'-GAT-3' motifs within gene promoters. May be involved in the regulation of some light-responsive genes. In Arabidopsis thaliana (Mouse-ear cress), this protein is GATA transcription factor 8 (GATA8).